The sequence spans 253 residues: Kojic acid related protein 1 (253 aa).

The next 3 membrane-spanning stretches (helical) occupy residues 23–43 (PIKFLWSGALFLGVLSIFILI), 53–73 (IFYPPVSVFVHVGLFIVYIVS), and 117–137 (ALFGFTIIIIVLYFVEIIVSV). A disordered region spans residues 174-253 (FPMMSPALPS…PPPPKKAAKV (80 aa)). Polar residues-rich tracts occupy residues 184–200 (GGTTQMMPTMSSRSPEF) and 226–240 (QQESSETLAPGNQPQ). Residues 242–253 (YFPPPPKKAAKV) are compositionally biased toward pro residues.

It localises to the membrane. Functionally, involved in mycelium growth and repression of conidia formation by affecting the expression of brlA and abaA. Acts as a negative regulation factor for kojic acid production through affecting the expression of kojA, kojR and kojT. This Aspergillus oryzae (strain ATCC 42149 / RIB 40) (Yellow koji mold) protein is Kojic acid related protein 1.